The primary structure comprises 174 residues: B3 domain-containing protein At3g06220 (174 aa).

A DNA-binding region (TF-B3) is located at residues 8-101 (PRFYTVFLSC…SYEVSIYGRG (94 aa)). The tract at residues 114-174 (EISDESESDN…ISDASDSDYY (61 aa)) is disordered. Acidic residues-rich tracts occupy residues 139–150 (ENSDDTEGDNDS) and 164–174 (EISDASDSDYY).

It is found in the nucleus. This chain is B3 domain-containing protein At3g06220, found in Arabidopsis thaliana (Mouse-ear cress).